The sequence spans 224 residues: PKHD-type hydroxylase Tgr7_2199 (224 aa).

In terms of domain architecture, Fe2OG dioxygenase spans 78–176 (KLSGAFFARY…RLVAVAWAES (99 aa)). Fe cation contacts are provided by His-96, Asp-98, and His-157. Arg-167 contributes to the 2-oxoglutarate binding site.

It depends on Fe(2+) as a cofactor. Requires L-ascorbate as cofactor.

This chain is PKHD-type hydroxylase Tgr7_2199, found in Thioalkalivibrio sulfidiphilus (strain HL-EbGR7).